Here is a 302-residue protein sequence, read N- to C-terminus: Melibiose operon regulatory protein (302 aa).

Residues 194–292 (SQMLGFIAEN…GMSPQQYRKL (99 aa)) enclose the HTH araC/xylS-type domain. 2 consecutive DNA-binding regions (H-T-H motif) follow at residues 211 to 232 (NDVA…QRVM) and 259 to 282 (ILDI…GKYV).

Functionally, transcription activator for the expression of the melAB operon. MelR binds at two sites located upstream of the melAB transcription site. The polypeptide is Melibiose operon regulatory protein (melR) (Escherichia coli O6:H1 (strain CFT073 / ATCC 700928 / UPEC)).